We begin with the raw amino-acid sequence, 216 residues long: Octanoyltransferase (216 aa).

Residues 24–212 form the BPL/LPL catalytic domain; that stretch reads KFRKECILFL…NLCSFLEPIN (189 aa). Substrate is bound by residues 69–76, 140–142, and 153–155; these read RGGDFTAH, SIG, and GIA. Cys171 acts as the Acyl-thioester intermediate in catalysis.

It belongs to the LipB family.

It localises to the cytoplasm. The catalysed reaction is octanoyl-[ACP] + L-lysyl-[protein] = N(6)-octanoyl-L-lysyl-[protein] + holo-[ACP] + H(+). The protein operates within protein modification; protein lipoylation via endogenous pathway; protein N(6)-(lipoyl)lysine from octanoyl-[acyl-carrier-protein]: step 1/2. Catalyzes the transfer of endogenously produced octanoic acid from octanoyl-acyl-carrier-protein onto the lipoyl domains of lipoate-dependent enzymes. Lipoyl-ACP can also act as a substrate although octanoyl-ACP is likely to be the physiological substrate. The protein is Octanoyltransferase of Leptospira interrogans serogroup Icterohaemorrhagiae serovar copenhageni (strain Fiocruz L1-130).